A 419-amino-acid polypeptide reads, in one-letter code: Synaptotagmin-2 (419 aa).

The Vesicular portion of the chain corresponds to 1-62 (MRNIFKRNQE…NEINKIPLPP (62 aa)). Residues 16 to 39 (ATTTATMPIGPVDNSTESGGAGES) are disordered. N-linked (GlcNAc...) asparagine glycosylation occurs at Asn-29. Residues 63–83 (WALIAIAVVAGLLLLTCCFCI) form a helical membrane-spanning segment. At 84–419 (CKKCCCKKKK…EVDALLGKNK (336 aa)) the chain is on the cytoplasmic side. Residues 99-138 (GKGMKNAMNMKDMKGGQDDDDAETGLTEGEGEGEEEKEPE) form a disordered region. Over residues 116 to 136 (DDDDAETGLTEGEGEGEEEKE) the composition is skewed to acidic residues. Phosphothreonine occurs at positions 122 and 125. The tract at residues 133 to 379 (EEKEPENLGK…AIGKIFVGSN (247 aa)) is phospholipid binding. C2 domains lie at 139 to 258 (NLGK…EEWR) and 270 to 403 (KLGD…AQWH). Positions 169, 170, and 176 each coordinate Ca(2+). The residue at position 199 (Thr-199) is a Phosphothreonine. The residue at position 227 (Tyr-227) is a Phosphotyrosine. Residues Asp-228, Phe-229, Asp-230, Ser-233, Lys-234, Asp-236, Asp-301, Asp-307, Asp-361, and Asp-363 each contribute to the Ca(2+) site. Thr-383 is modified (phosphothreonine).

The protein belongs to the synaptotagmin family. Homotetramer. Heterodimer; heterodimerizes with SYT1 in presence of calcium. Interacts with STON2. Interacts with SCAMP5. Interacts with PRRT2. Ca(2+) is required as a cofactor. Phosphorylation at Thr-199 by WNK1, changes the calcium requirement for SYT2-binding to phospholipid membranes. Expressed at the neuromuscular junction. Expressed in melanocytes.

It localises to the cytoplasmic vesicle. The protein resides in the secretory vesicle. Its subcellular location is the synaptic vesicle membrane. It is found in the chromaffin granule membrane. The protein localises to the cytoplasm. Its function is as follows. Exhibits calcium-dependent phospholipid and inositol polyphosphate binding properties. May have a regulatory role in the membrane interactions during trafficking of synaptic vesicles at the active zone of the synapse. Plays a role in dendrite formation by melanocytes. The polypeptide is Synaptotagmin-2 (Homo sapiens (Human)).